The following is a 103-amino-acid chain: MYAVFQSGGKQHRVSEGQTLRLEKLDVETGATVDFDNVLMIANGEEITVGAPLVAGGKVTAEVVQHGRGDKVKIVKFRRRKHSRKQQGHRQWFTEVRITGISA.

Belongs to the bacterial ribosomal protein bL21 family. As to quaternary structure, part of the 50S ribosomal subunit. Contacts protein L20.

Its function is as follows. This protein binds to 23S rRNA in the presence of protein L20. This is Large ribosomal subunit protein bL21 from Aliivibrio salmonicida (strain LFI1238) (Vibrio salmonicida (strain LFI1238)).